The primary structure comprises 518 residues: Laccase (518 aa).

The signal sequence occupies residues 1-21; sequence MSRFQSLLSFVLVSLAAVANA. Plastocyanin-like domains are found at residues 23–148 and 160–302; these read IGPV…FVVY and IDND…ILRY. 2 N-linked (GlcNAc...) asparagine glycosylation sites follow: Asn-72 and Asn-75. The Cu cation site is built by His-85, His-87, His-130, and His-132. 2 disulfides stabilise this stretch: Cys-106/Cys-507 and Cys-138/Cys-226. The N-linked (GlcNAc...) asparagine glycan is linked to Asn-229. Residues 308-330 are disordered; the sequence is VEPTTTQTTSTKPLNEADLHPLT. Residues Asn-354, Asn-362, and Asn-398 are each glycosylated (N-linked (GlcNAc...) asparagine). One can recognise a Plastocyanin-like 3 domain in the interval 369–489; sequence SVPVLLQILS…AGFAVVLAED (121 aa). Cu cation contacts are provided by His-416, His-419, His-421, His-471, Cys-472, His-473, and His-477.

The protein belongs to the multicopper oxidase family. It depends on Cu cation as a cofactor.

It localises to the secreted. The catalysed reaction is 4 hydroquinone + O2 = 4 benzosemiquinone + 2 H2O. Functionally, lignin degradation and detoxification of lignin-derived products. Cleaves the C-C and C-O bonds of some phenolic lignin model compounds (such as O- and P-quinols, aminophenols and phenylenediamine). May also be involved in synthesis of phenoxazinone pigments. In Pycnoporus cinnabarinus (Cinnabar-red polypore), this protein is Laccase (LCC3-1).